A 124-amino-acid polypeptide reads, in one-letter code: Large ribosomal subunit protein bL12 (124 aa).

Belongs to the bacterial ribosomal protein bL12 family. As to quaternary structure, homodimer. Part of the ribosomal stalk of the 50S ribosomal subunit. Forms a multimeric L10(L12)X complex, where L10 forms an elongated spine to which 2 to 4 L12 dimers bind in a sequential fashion. Binds GTP-bound translation factors.

Its function is as follows. Forms part of the ribosomal stalk which helps the ribosome interact with GTP-bound translation factors. Is thus essential for accurate translation. The protein is Large ribosomal subunit protein bL12 of Cupriavidus pinatubonensis (strain JMP 134 / LMG 1197) (Cupriavidus necator (strain JMP 134)).